The sequence spans 324 residues: Fructose-1,6-bisphosphatase class 1 (324 aa).

4 residues coordinate Mg(2+): Glu88, Asp107, Leu109, and Asp110. Substrate contacts are provided by residues 110-113 (DGSS), Asn199, and Lys265. Glu271 contributes to the Mg(2+) binding site.

Belongs to the FBPase class 1 family. In terms of assembly, homotetramer. Mg(2+) serves as cofactor.

The protein localises to the cytoplasm. The catalysed reaction is beta-D-fructose 1,6-bisphosphate + H2O = beta-D-fructose 6-phosphate + phosphate. Its pathway is carbohydrate biosynthesis; gluconeogenesis. This Neisseria meningitidis serogroup B (strain ATCC BAA-335 / MC58) protein is Fructose-1,6-bisphosphatase class 1.